The following is a 313-amino-acid chain: Ubiquinone biosynthesis protein COQ4, mitochondrial (313 aa).

Residues histidine 197, aspartate 198, histidine 201, and glutamate 213 each coordinate Zn(2+). A disordered region spans residues 290–313 (QPPDLRELRRKQKKLPEPERENAN). Over residues 303 to 313 (KLPEPERENAN) the composition is skewed to basic and acidic residues.

It belongs to the COQ4 family. Component of a multi-subunit COQ enzyme complex, composed of at least COQ3, COQ4, COQ5, COQ6, COQ7 and COQ9. Requires Zn(2+) as cofactor.

It is found in the mitochondrion inner membrane. The catalysed reaction is a 4-hydroxy-3-methoxy-5-(all-trans-polyprenyl)benzoate + H(+) = a 2-methoxy-6-(all-trans-polyprenyl)phenol + CO2. The protein operates within cofactor biosynthesis; ubiquinone biosynthesis. Functionally, lyase that catalyzes the C1-decarboxylation of 4-hydroxy-3-methoxy-5-(all-trans-polyprenyl)benzoic acid into 2-methoxy-6-(all-trans-polyprenyl)phenol during ubiquinone biosynthesis. This chain is Ubiquinone biosynthesis protein COQ4, mitochondrial, found in Meyerozyma guilliermondii (strain ATCC 6260 / CBS 566 / DSM 6381 / JCM 1539 / NBRC 10279 / NRRL Y-324) (Yeast).